The following is a 209-amino-acid chain: Uracil phosphoribosyltransferase (209 aa).

Residues Arg79, Arg104, and 131–139 contribute to the 5-phospho-alpha-D-ribose 1-diphosphate site; that span reads DPMLATGGS. Residues Ile194 and 199-201 contribute to the uracil site; that span reads GDA. Position 200 (Asp200) interacts with 5-phospho-alpha-D-ribose 1-diphosphate.

This sequence belongs to the UPRTase family. The cofactor is Mg(2+).

It carries out the reaction UMP + diphosphate = 5-phospho-alpha-D-ribose 1-diphosphate + uracil. It functions in the pathway pyrimidine metabolism; UMP biosynthesis via salvage pathway; UMP from uracil: step 1/1. With respect to regulation, allosterically activated by GTP. Functionally, catalyzes the conversion of uracil and 5-phospho-alpha-D-ribose 1-diphosphate (PRPP) to UMP and diphosphate. In Lactobacillus delbrueckii subsp. bulgaricus (strain ATCC 11842 / DSM 20081 / BCRC 10696 / JCM 1002 / NBRC 13953 / NCIMB 11778 / NCTC 12712 / WDCM 00102 / Lb 14), this protein is Uracil phosphoribosyltransferase.